The primary structure comprises 471 residues: Glutamate--tRNA ligase (471 aa).

The short motif at 9-19 (PSPTGYLHVGG) is the 'HIGH' region element. Cys98, Cys100, Cys125, and His127 together coordinate Zn(2+). The 'KMSKS' region signature appears at 237 to 241 (KLSKR). Lys240 serves as a coordination point for ATP.

This sequence belongs to the class-I aminoacyl-tRNA synthetase family. Glutamate--tRNA ligase type 1 subfamily. Monomer. The cofactor is Zn(2+).

It is found in the cytoplasm. The enzyme catalyses tRNA(Glu) + L-glutamate + ATP = L-glutamyl-tRNA(Glu) + AMP + diphosphate. Functionally, catalyzes the attachment of glutamate to tRNA(Glu) in a two-step reaction: glutamate is first activated by ATP to form Glu-AMP and then transferred to the acceptor end of tRNA(Glu). This is Glutamate--tRNA ligase from Salmonella dublin (strain CT_02021853).